A 495-amino-acid polypeptide reads, in one-letter code: Trimethylamine methyltransferase MttB (495 aa).

Pyl-334 is a non-standard amino acid (pyrrolysine).

The protein belongs to the trimethylamine methyltransferase family. As to quaternary structure, can form a complex with MttC.

It catalyses the reaction Co(I)-[trimethylamine-specific corrinoid protein] + trimethylamine + H(+) = methyl-Co(III)-[trimethylamine-specific corrinoid protein] + dimethylamine. The protein operates within one-carbon metabolism; methanogenesis from trimethylamine. In terms of biological role, catalyzes the transfer of a methyl group from trimethylamine to the corrinoid cofactor of MttC. In Methanosarcina barkeri, this protein is Trimethylamine methyltransferase MttB.